A 590-amino-acid polypeptide reads, in one-letter code: Selenoprotein N (590 aa).

Residues 1–26 (MGRARPGQRGPPSPGPAAQPPAPPRR) are disordered. Residues 1–43 (MGRARPGQRGPPSPGPAAQPPAPPRRRARSLALLGALLAAAAA) form the signal peptide. Residues 9–23 (RGPPSPGPAAQPPAP) show a composition bias toward pro residues. Positions 67–102 (TLGTDGLFLFSSLDTDGDMYISPEEFKPIAEKLTGS) constitute an EF-hand domain. The N-linked (GlcNAc...) asparagine glycan is linked to N126. A non-standard amino acid (selenocysteine) is located at residue U127. N190 carries N-linked (GlcNAc...) asparagine glycosylation. A non-standard amino acid (selenocysteine) is located at residue U462. N-linked (GlcNAc...) asparagine glycosylation is found at N483, N505, and N531.

In terms of assembly, interacts with RYR1, RYR2 and RYR3. N-glycosylated. As to expression, isoform 1 and isoform 2 are expressed in skeletal muscle, brain, lung and placenta. Isoform 2 is also expressed in heart, diaphragm and stomach.

It localises to the endoplasmic reticulum membrane. Its function is as follows. Plays an important role in cell protection against oxidative stress and in the regulation of redox-related calcium homeostasis. Regulates the calcium level of the ER by protecting the calcium pump ATP2A2 against the oxidoreductase ERO1A-mediated oxidative damage. Within the ER, ERO1A activity increases the concentration of H(2)O(2), which attacks the luminal thiols in ATP2A2 and thus leads to cysteinyl sulfenic acid formation (-SOH) and SEPN1 reduces the SOH back to free thiol (-SH), thus restoring ATP2A2 activity. Acts as a modulator of ryanodine receptor (RyR) activity: protects RyR from oxidation due to increased oxidative stress, or directly controls the RyR redox state, regulating the RyR-mediated calcium mobilization required for normal muscle development and differentiation. Functionally, essential for muscle regeneration and satellite cell maintenance in skeletal muscle. The chain is Selenoprotein N from Homo sapiens (Human).